The primary structure comprises 304 residues: Dermonecrotic toxin LiSicTox-betaIA1i (304 aa).

The first 21 residues, 1–21 (MLLPAVISFIVYAVFLQEANG), serve as a signal peptide directing secretion. Positions 22 to 26 (HAAER) are excised as a propeptide. Histidine 38 is an active-site residue. Mg(2+)-binding residues include glutamate 58 and aspartate 60. Catalysis depends on histidine 74, which acts as the Nucleophile. 2 disulfide bridges follow: cysteine 78–cysteine 84 and cysteine 80–cysteine 223. Mg(2+) is bound at residue aspartate 118.

This sequence belongs to the arthropod phospholipase D family. Class II subfamily. Class IIb sub-subfamily. Requires Mg(2+) as cofactor. In terms of tissue distribution, expressed by the venom gland.

The protein resides in the secreted. It carries out the reaction an N-(acyl)-sphingosylphosphocholine = an N-(acyl)-sphingosyl-1,3-cyclic phosphate + choline. The catalysed reaction is an N-(acyl)-sphingosylphosphoethanolamine = an N-(acyl)-sphingosyl-1,3-cyclic phosphate + ethanolamine. The enzyme catalyses a 1-acyl-sn-glycero-3-phosphocholine = a 1-acyl-sn-glycero-2,3-cyclic phosphate + choline. It catalyses the reaction a 1-acyl-sn-glycero-3-phosphoethanolamine = a 1-acyl-sn-glycero-2,3-cyclic phosphate + ethanolamine. Functionally, dermonecrotic toxins cleave the phosphodiester linkage between the phosphate and headgroup of certain phospholipids (sphingolipid and lysolipid substrates), forming an alcohol (often choline) and a cyclic phosphate. This toxin acts on sphingomyelin (SM) with low activity. It may also act on ceramide phosphoethanolamine (CPE), lysophosphatidylcholine (LPC) and lysophosphatidylethanolamine (LPE), but not on lysophosphatidylserine (LPS), and lysophosphatidylglycerol (LPG). It acts by transphosphatidylation, releasing exclusively cyclic phosphate products as second products. Induces inflammatory response but no or very weak hemolysis, dermonecrosis, vascular permeability, edema, and cytotoxicity against renal epithelial cells. Causes swelling and erythema. In vivo, is not lethal to mice when intraperitoneally injected. The protein is Dermonecrotic toxin LiSicTox-betaIA1i of Loxosceles intermedia (Brown spider).